Reading from the N-terminus, the 1143-residue chain is MEAAAMAVTAATGALAPVLVKLAALLDDGECNLLEGSRSDAEFIRSELEAVHSLLTPNILGRMGDDDAACKDGLIAEVRELSYDLDDAVDDFLELNFEQRRSASPFGELKARVEERVSNRFSDWKLPAASLPPSSVHRRAGLPPPDAGLVGMHKRKEELIELLEQGSSDASRWRKRKPHVPLRIMGGEMQKIVFKIPMVDDKSRTKAMSLVASTVGVHSVAIAGDLRDQVVVVGDGIDSINLVSALRKKVGPAMFLEVSQVKEDVKEITAMLAPVKSICEFHEVKTICILGLPGGGKTTIARVLYHALGTQFQCRVFASISPSSSPSPNLTETLADIFAQAQLGVTDTLSTPYGGSGTGRALQQHLIDNISAFLLNKKYLIVIDDIWHWEEWEVIRKSIPKNDLGGRIIMTTRLNSIAEKCHTDDNDVFVYEVGDLDNNDAWSLSWGIATKSGAGNRIGTGEDNSCYDIVNMCYGMPLALIWLSSALVGEIEELGGAEVKKCRDLRHIEDGILDIPSLQPLAESLCLGYNHLPLYLRTLLLYCSAYHWSNRIERGRLVRRWIAEGFVSEEKEAEGYFGELINRGWITQHGDNNSYNYYEIHPVMLAFLRCKSKEYNFLTCLGLGSDTSTSASSPRLIRRLSLQGGYPVDCLSSMSMDVSHTCSLVVLGDVARPKGIPFYMFKRLRVLDLEDNKDIQDSHLQGICEQLSLRVRYLGLKGTRIRKLPQEMRKLKHLEILYVGSTRISELPQEIGELKHLRILDVRNTDITELPLQIRELQHLHTLDVRNTPISELPPQVGKLQNLKIMCVRSTGVRELPKEIGELNHLQTLDVRNTRVRELPWQAGQISQSLRVLAGDSGDGVRLPEGVCEALINGIPGATRAKCREVLSIAIIDRFGPPLVGIFKVPGSHMRIPKMIKDHFRVLSCLDIRLCHKLEDDDQKFLAEMPNLQTLVLRFEALPRQPITINGTGFQMLESFRVDSRVPRIAFHEDAMPNLKLLEFKFYAGPASNDAIGITNLKSLQKVVFRCSPWYKSDAPGISATIDVVKKEAEEHPNRPITLLINAGYKEISTESHGSSENIAGSSGIDTEPAQAQHDNLPAVRDDYKGKGILLDGRCPTCGRATKIEEETQDRVADIEIQTETTS.

The interval 1–190 is structured coiled coil (CC) domain; sequence MEAAAMAVTA…PLRIMGGEMQ (190 aa). The HMA domain occupies 189-258; sequence MQKIVFKIPM…KVGPAMFLEV (70 aa). Positions 191 to 264 are HMA-like domain; sequence KIVFKIPMVD…FLEVSQVKED (74 aa). Residues 282 to 570 enclose the NB-ARC domain; that stretch reads HEVKTICILG…WIAEGFVSEE (289 aa). LRR repeat units lie at residues 681 to 706, 708 to 731, 732 to 754, 756 to 777, 778 to 800, 802 to 823, 824 to 848, 945 to 968, 979 to 1002, and 1004 to 1027; these read FKRL…ICEQ, SLRV…MRKL, KHLE…IGEL, HLRI…IREL, QHLH…VGKL, NLKI…IGEL, NHLQ…QISQ, MPNL…INGT, DSRV…EFKF, and AGPA…VFRC.

This sequence belongs to the disease resistance NB-LRR family. As to quaternary structure, interacts with AVR-Pik through its N-terminal part containing the HMA-like domain. As to expression, constitutively expressed.

Disease resistance (R) protein that specifically recognizes the AVR-Pik effector avirulence protein from M.oryzae. Resistance proteins guard the plant against pathogens that contain an appropriate avirulence protein via an indirect interaction with this avirulence protein. That triggers a defense system including the hypersensitive response, which restricts the pathogen growth. Contribution of Pikm-2 is required to recognize the effector avirulence protein AVR-Pik. The sequence is that of Disease resistance protein Pikm1-TS from Oryza sativa subsp. japonica (Rice).